The chain runs to 322 residues: Phthalate dioxygenase reductase (322 aa).

The FAD-binding FR-type domain occupies 7-109; it reads DGFLRLKIAS…SLPRNEFPLD (103 aa). FMN is bound by residues 56–57, 73–75, 81–84, threonine 125, and phenylalanine 226; these read RT, AVK, and RGGS. Residues 239 to 322 form the 2Fe-2S ferredoxin-type domain; that stretch reads FTVRLSRSGT…AKSAELVLDL (84 aa). [2Fe-2S] cluster is bound at residue cysteine 273. Position 275 (serine 275) interacts with FMN. [2Fe-2S] cluster contacts are provided by cysteine 278, cysteine 281, and cysteine 309.

This sequence belongs to the PDR/VanB family. Monomer. Requires FMN as cofactor.

In terms of biological role, component of the electron transfer chain involved in pyridine nucleotide-dependent dihydroxylation of phthalate. Utilizes FMN to mediate electron transfer from the two-electron donor, NADH, to the one-electron acceptor, (2Fe-2S). This is Phthalate dioxygenase reductase (ophA1) from Burkholderia cepacia (Pseudomonas cepacia).